Consider the following 107-residue polypeptide: Translation initiation factor IF-1, chloroplastic (107 aa).

In terms of domain architecture, S1-like spans 8–83; sequence REKKNPREAK…SKGRIIYRLP (76 aa).

Belongs to the IF-1 family. In terms of assembly, component of the 30S ribosomal translation pre-initiation complex which assembles on the 30S ribosome in the order IF-2 and IF-3, IF-1 and N-formylmethionyl-tRNA(fMet); mRNA recruitment can occur at any time during PIC assembly.

The protein localises to the plastid. Its subcellular location is the chloroplast. Its function is as follows. One of the essential components for the initiation of protein synthesis. Stabilizes the binding of IF-2 and IF-3 on the 30S subunit to which N-formylmethionyl-tRNA(fMet) subsequently binds. Helps modulate mRNA selection, yielding the 30S pre-initiation complex (PIC). Upon addition of the 50S ribosomal subunit IF-1, IF-2 and IF-3 are released leaving the mature 70S translation initiation complex. This chain is Translation initiation factor IF-1, chloroplastic, found in Lolium perenne (Perennial ryegrass).